A 500-amino-acid polypeptide reads, in one-letter code: NAD(P)H-quinone oxidoreductase chain 4, chloroplastic (500 aa).

A run of 14 helical transmembrane segments spans residues 4 to 24 (FPWL…IFLL), 37 to 57 (LCIC…HFQL), 87 to 107 (IGPI…AWPV), 111 to 131 (AQLF…SFSS), 134 to 154 (LLLF…LLSM), 167 to 187 (FILY…GIGL), 208 to 228 (ALEV…LPII), 242 to 262 (HYST…YGLV), 272 to 292 (AHCL…IYAA), 305 to 325 (IAYS…SLSD), 330 to 350 (GAIL…FLAG), 386 to 406 (LALP…GIIT), 416 to 436 (ILIA…SLSM), and 462 to 482 (LFVS…PDFV).

Belongs to the complex I subunit 4 family.

Its subcellular location is the plastid. The protein localises to the chloroplast thylakoid membrane. The catalysed reaction is a plastoquinone + NADH + (n+1) H(+)(in) = a plastoquinol + NAD(+) + n H(+)(out). The enzyme catalyses a plastoquinone + NADPH + (n+1) H(+)(in) = a plastoquinol + NADP(+) + n H(+)(out). The chain is NAD(P)H-quinone oxidoreductase chain 4, chloroplastic from Oenothera parviflora (Small-flowered evening primrose).